Consider the following 218-residue polypeptide: Protein-L-isoaspartate O-methyltransferase 1 (218 aa).

The active site involves serine 69.

It belongs to the methyltransferase superfamily. L-isoaspartyl/D-aspartyl protein methyltransferase family.

It localises to the cytoplasm. The catalysed reaction is [protein]-L-isoaspartate + S-adenosyl-L-methionine = [protein]-L-isoaspartate alpha-methyl ester + S-adenosyl-L-homocysteine. In terms of biological role, catalyzes the methyl esterification of L-isoaspartyl residues in peptides and proteins that result from spontaneous decomposition of normal L-aspartyl and L-asparaginyl residues. It plays a role in the repair and/or degradation of damaged proteins. The polypeptide is Protein-L-isoaspartate O-methyltransferase 1 (Marinobacter nauticus (strain ATCC 700491 / DSM 11845 / VT8) (Marinobacter aquaeolei)).